Consider the following 79-residue polypeptide: uncharacterized protein (79 aa).

The disordered stretch occupies residues 1–37 (MQLDVFSRMMFGDAAKPTEEKEEEQQEEVSQVSQTND).

This is an uncharacterized protein from Bacillus subtilis (strain 168).